A 328-amino-acid polypeptide reads, in one-letter code: MPITRMRMRPWLEMQINSNQIPGLSWINKEEMIFQIPWKHAALHGWDINKDACLFRSWAIHTGRYKAGEKEPDPKTWKANFRCAMNSLPDIEEVKDQSRNKGSSAVRVYRMLPPLTKNQRKERKSKSSRDTKSKTKRKLCGDSSPDTLSDGLSSSTLPDDHSSYTAQGYLGQDLDMDRDITPALSPCVVSSSLSEWHMQMDIMPDSTTDLYNLQVSPMPSTSEAATDEDEEGKLPEDIMKLFEQSEWQPTHVDGKGYLLNEPGAQLSTVYGDFSCKEEPEIDSPGGDIEIGIQRVFTEMKNMDPVMWMDTLLGNSTRPPSIQAIPCAP.

The IRF tryptophan pentad repeat DNA-binding region spans 5 to 113 (RMRMRPWLEM…SAVRVYRMLP (109 aa)). Residue lysine 78 is modified to N6-acetyllysine. The tract at residues 92 to 164 (EEVKDQSRNK…STLPDDHSSY (73 aa)) is disordered. Residues 141-157 (GDSSPDTLSDGLSSSTL) are compositionally biased toward low complexity. Residues lysine 276 and lysine 300 each participate in a glycyl lysine isopeptide (Lys-Gly) (interchain with G-Cter in SUMO) cross-link.

It belongs to the IRF family. As to quaternary structure, monomer. Homodimer. Interacts with EP300. Interacts with MYD88. Interacts with PIAS3. Interacts with SPOP. Post-translationally, phosphorylated by CK2 and this positively regulates its activity. In terms of processing, sumoylation represses the transcriptional activity and displays enhanced resistance to protein degradation. Sumoylated by UBE2I/UBC9 and SUMO1. Inactivates the tumor suppressor activity. Elevated levels in tumor cells. Major site is Lys-276. Sumoylation is enhanced by PIAS3. Desumoylated by SENP1 in tumor cells and appears to compete with ubiquitination on C-terminal sites. Ubiquitinated in a SPOP-depedent manner. Appears to compete with sumoylation on C-terminal sites.

It is found in the nucleus. It localises to the cytoplasm. Activated by MYD88. In terms of biological role, transcriptional regulator which displays a remarkable functional diversity in the regulation of cellular responses. Regulates transcription of IFN and IFN-inducible genes, host response to viral and bacterial infections, regulation of many genes expressed during hematopoiesis, inflammation, immune responses and cell proliferation and differentiation, regulation of the cell cycle and induction of growth arrest and programmed cell death following DNA damage. Stimulates both innate and acquired immune responses through the activation of specific target genes and can act as a transcriptional activator and repressor regulating target genes by binding to an interferon-stimulated response element (ISRE) in their promoters. Has an essentail role in IFNG-dependent immunity to mycobacteria. Binds to a consensus sequence in gene promoters. Its target genes for transcriptional activation activity include: genes involved in anti-viral response, such as IFN-alpha/beta, RIGI, TNFSF10/TRAIL, ZBP1, OAS1/2, PIAS1/GBP, EIF2AK2/PKR and RSAD2/viperin; antibacterial response, such as GBP2, GBP5 and NOS2/INOS; anti-proliferative response, such as p53/TP53, LOX and CDKN1A; apoptosis, such as BBC3/PUMA, CASP1, CASP7 and CASP8; immune response, such as IL7, IL12A/B and IL15, PTGS2/COX2 and CYBB; DNA damage responses and DNA repair, such as POLQ/POLH; MHC class I expression, such as TAP1, PSMB9/LMP2, PSME1/PA28A, PSME2/PA28B and B2M and MHC class II expression, such as CIITA; metabolic enzymes, such as ACOD1/IRG1. Represses genes involved in anti-proliferative response, such as BIRC5/survivin, CCNB1, CCNE1, CDK1, CDK2 and CDK4 and in immune response, such as FOXP3, IL4, ANXA2 and TLR4. Stimulates p53/TP53-dependent transcription through enhanced recruitment of EP300 leading to increased acetylation of p53/TP53. Plays an important role in immune response directly affecting NK maturation and activity, macrophage production of IL12, Th1 development and maturation of CD8+ T-cells. Also implicated in the differentiation and maturation of dendritic cells and in the suppression of regulatory T (Treg) cells development. Acts as a tumor suppressor and plays a role not only in antagonism of tumor cell growth but also in stimulating an immune response against tumor cells. This is Interferon regulatory factor 1 (Irf1) from Rattus norvegicus (Rat).